The chain runs to 262 residues: Tryptophan synthase alpha chain (262 aa).

Residues Glu48 and Asp59 each act as proton acceptor in the active site.

The protein belongs to the TrpA family. In terms of assembly, tetramer of two alpha and two beta chains.

It catalyses the reaction (1S,2R)-1-C-(indol-3-yl)glycerol 3-phosphate + L-serine = D-glyceraldehyde 3-phosphate + L-tryptophan + H2O. Its pathway is amino-acid biosynthesis; L-tryptophan biosynthesis; L-tryptophan from chorismate: step 5/5. In terms of biological role, the alpha subunit is responsible for the aldol cleavage of indoleglycerol phosphate to indole and glyceraldehyde 3-phosphate. The polypeptide is Tryptophan synthase alpha chain (Helicobacter pylori (strain Shi470)).